The primary structure comprises 370 residues: Cobalt-precorrin-5B C(1)-methyltransferase (370 aa).

Belongs to the CbiD family.

It carries out the reaction Co-precorrin-5B + S-adenosyl-L-methionine = Co-precorrin-6A + S-adenosyl-L-homocysteine. The protein operates within cofactor biosynthesis; adenosylcobalamin biosynthesis; cob(II)yrinate a,c-diamide from sirohydrochlorin (anaerobic route): step 6/10. Functionally, catalyzes the methylation of C-1 in cobalt-precorrin-5B to form cobalt-precorrin-6A. The protein is Cobalt-precorrin-5B C(1)-methyltransferase of Prochlorococcus marinus (strain MIT 9312).